We begin with the raw amino-acid sequence, 235 residues long: Myb family transcription factor PHL12 (235 aa).

A compositionally biased stretch (basic and acidic residues) spans 1 to 12 (MMQSREEIRDDS). A disordered region spans residues 1-20 (MMQSREEIRDDSSSGLVLTT). Residues 20 to 80 (TDPKPRLRWT…HLQKFRLGKQ (61 aa)) enclose the HTH myb-type domain. The H-T-H motif DNA-binding region spans 51-76 (PKTIMRVMGVKGLTLYHLKSHLQKFR). Residues 119–139 (RNMNEMQMEVQRRIEEEVVIE) form a coiled coil region.

This sequence belongs to the MYB-CC family. Expressed in phloem and/or cambium.

Its subcellular location is the nucleus. The chain is Myb family transcription factor PHL12 from Arabidopsis thaliana (Mouse-ear cress).